Consider the following 466-residue polypeptide: MPHSYDYDAIVIGSGPGGEGAAMGLVKQGARVAVIERYQNVGGGCTHWGTIPSKALRHAVSRIIEFNQNPLYSDHSRLLRSSFADILNHADNVINQQTRMRQGFYERNHCEILQGNARFVDEHTLALDCPDGSVETLTAEKFVIACGSRPYHPTDVDFTHPRIYDSDSILSMHHEPRHVLIYGAGVIGCEYASIFRGMDVKVDLINTRDRLLAFLDQEMSDSLSYHFWNSGVVIRHNEEYEKIEGCDDGVIMHLKSGKKLKADCLLYANGRTGNTDSLALQNIGLETDSRGQLKVNSMYQTAQPHVYAVGDVIGYPSLASAAYDQGRIAAQALVKGEATAHLIEDIPTGIYTIPEISSVGKTEQQLTTMKVPYEVGRAQFKHLARAQIVGMNVGTLKILFHRETKEILGIHCFGERAAEIIHIGQAIMEQKGGGNTIEYFVNTTFNYPTMAEAYRVAALNGLNRLF.

Glu36–Cys45 provides a ligand contact to FAD.

This sequence belongs to the class-I pyridine nucleotide-disulfide oxidoreductase family. The cofactor is FAD.

Its subcellular location is the cytoplasm. The catalysed reaction is NAD(+) + NADPH = NADH + NADP(+). In terms of biological role, conversion of NADPH, generated by peripheral catabolic pathways, to NADH, which can enter the respiratory chain for energy generation. The polypeptide is Soluble pyridine nucleotide transhydrogenase (Escherichia coli O6:K15:H31 (strain 536 / UPEC)).